The sequence spans 521 residues: Cholesterol side-chain cleavage enzyme, mitochondrial (521 aa).

The transit peptide at 1-39 directs the protein to the mitochondrion; that stretch reads MLAKGLPPRSVLVKGCQTFLSAPREGLGRLRVPTGEGAG. Residue Cys462 participates in heme binding.

Belongs to the cytochrome P450 family. Interacts with FDX1/adrenodoxin. Heme serves as cofactor.

Its subcellular location is the mitochondrion inner membrane. It carries out the reaction 6 reduced [adrenodoxin] + cholesterol + 3 O2 + 6 H(+) = 4-methylpentanal + pregnenolone + 6 oxidized [adrenodoxin] + 4 H2O. The catalysed reaction is 2 reduced [adrenodoxin] + cholesterol + O2 + 2 H(+) = (22R)-hydroxycholesterol + 2 oxidized [adrenodoxin] + H2O. It catalyses the reaction (22R)-hydroxycholesterol + 2 reduced [adrenodoxin] + O2 + 2 H(+) = (20R,22R)-20,22-dihydroxycholesterol + 2 oxidized [adrenodoxin] + H2O. The enzyme catalyses (20R,22R)-20,22-dihydroxycholesterol + 2 reduced [adrenodoxin] + O2 + 2 H(+) = 4-methylpentanal + pregnenolone + 2 oxidized [adrenodoxin] + 2 H2O. It functions in the pathway lipid metabolism; C21-steroid hormone metabolism. The protein operates within steroid metabolism; cholesterol metabolism. Its function is as follows. A cytochrome P450 monooxygenase that catalyzes the side-chain hydroxylation and cleavage of cholesterol to pregnenolone, the precursor of most steroid hormones. Catalyzes three sequential oxidation reactions of cholesterol, namely the hydroxylation at C22 followed with the hydroxylation at C20 to yield 20R,22R-hydroxycholesterol that is further cleaved between C20 and C22 to yield the C21-steroid pregnenolone and 4-methylpentanal. Mechanistically, uses molecular oxygen inserting one oxygen atom into a substrate and reducing the second into a water molecule. Two electrons are provided by NADPH via a two-protein mitochondrial transfer system comprising flavoprotein FDXR (adrenodoxin/ferredoxin reductase) and nonheme iron-sulfur protein FDX1 or FDX2 (adrenodoxin/ferredoxin). This is Cholesterol side-chain cleavage enzyme, mitochondrial from Homo sapiens (Human).